The primary structure comprises 209 residues: Ancillary SecYEG translocon subunit (209 aa).

Topologically, residues 1 to 23 (MAAHLEEQQELDNFKYFWKTTGK) are cytoplasmic. A helical membrane pass occupies residues 24-42 (WLFALLILAALGYLGYTVY). Residues 43-209 (QNRAASQNQE…LLQMKLDSLK (167 aa)) are Periplasmic-facing. One copy of the TPR repeat lies at 161-194 (PLLMETKGDVYAAQEKSQEALKNYGQALEKMPQD).

The protein belongs to the YfgM family. In terms of assembly, interacts with the SecYEG translocon. Forms a complex with PpiD.

The protein resides in the cell inner membrane. May mediate protein transfer from the SecYEG translocon to the periplasmic chaperone network via its periplasmic C-terminal region. The chain is Ancillary SecYEG translocon subunit from Neisseria gonorrhoeae (strain ATCC 700825 / FA 1090).